A 330-amino-acid polypeptide reads, in one-letter code: Aspartate--ammonia ligase (330 aa).

The protein belongs to the class-II aminoacyl-tRNA synthetase family. AsnA subfamily.

The protein localises to the cytoplasm. It catalyses the reaction L-aspartate + NH4(+) + ATP = L-asparagine + AMP + diphosphate + H(+). Its pathway is amino-acid biosynthesis; L-asparagine biosynthesis; L-asparagine from L-aspartate (ammonia route): step 1/1. In Escherichia coli O7:K1 (strain IAI39 / ExPEC), this protein is Aspartate--ammonia ligase.